Reading from the N-terminus, the 230-residue chain is Triosephosphate isomerase (230 aa).

9–11 (NYK) contributes to the substrate binding site. His93 functions as the Electrophile in the catalytic mechanism. Glu141 functions as the Proton acceptor in the catalytic mechanism. Residues Ile146, Gly180, and 201-202 (AS) each bind substrate.

It belongs to the triosephosphate isomerase family. In terms of assembly, homotetramer; dimer of dimers.

The protein localises to the cytoplasm. It catalyses the reaction D-glyceraldehyde 3-phosphate = dihydroxyacetone phosphate. The protein operates within carbohydrate biosynthesis; gluconeogenesis. Its pathway is carbohydrate degradation; glycolysis; D-glyceraldehyde 3-phosphate from glycerone phosphate: step 1/1. Its function is as follows. Involved in the gluconeogenesis. Catalyzes stereospecifically the conversion of dihydroxyacetone phosphate (DHAP) to D-glyceraldehyde-3-phosphate (G3P). This is Triosephosphate isomerase from Sulfolobus acidocaldarius (strain ATCC 33909 / DSM 639 / JCM 8929 / NBRC 15157 / NCIMB 11770).